The primary structure comprises 449 residues: L10-interacting MYB domain-containing protein (449 aa).

A Myb-like domain is found at 162 to 225; that stretch reads SNPQTKGYWS…YTRPQLKNHW (64 aa). A disordered region spans residues 297 to 324; it reads TYTPPSRSRKKLLHNRSESPQWRDTTPL. Positions 314-324 are enriched in polar residues; that stretch reads ESPQWRDTTPL.

In terms of assembly, interacts with RPL10A. In terms of tissue distribution, expressed in seedlings, leaves, roots, stems and flowers.

The protein resides in the nucleus. Functionally, transcriptional repressor that associates with ribosomal protein promoters. The polypeptide is L10-interacting MYB domain-containing protein (Arabidopsis thaliana (Mouse-ear cress)).